The chain runs to 570 residues: Low-affinity glucose transporter HXT1 (570 aa).

Polar residues predominate over residues 1 to 20 (MNSTPDLISPQKSNSSNSYE). Residues 1-51 (MNSTPDLISPQKSNSSNSYELESGRSKAMNTPEGKNESFHDNLSESQVQPA) form a disordered region. Residues 1–60 (MNSTPDLISPQKSNSSNSYELESGRSKAMNTPEGKNESFHDNLSESQVQPAVAPPNTGKG) lie on the Cytoplasmic side of the membrane. Phosphoserine occurs at positions 23, 38, and 44. The segment covering 34–43 (GKNESFHDNL) has biased composition (basic and acidic residues). A helical transmembrane segment spans residues 61-81 (VYVTVSICCVMVAFGGFIFGW). Residues 82 to 116 (DTGTISGFVAQTDFLRRFGMKHHDGSHYLSKVRTG) are Extracellular-facing. Residues 117–137 (LIVSIFNIGCAIGGIVLAKLG) form a helical membrane-spanning segment. Over 138–143 (DMYGRR) the chain is Cytoplasmic. The chain crosses the membrane as a helical span at residues 144–164 (IGLIVVVVIYTIGIIIQIASI). The Extracellular portion of the chain corresponds to 165-174 (NKWYQYFIGR). Residues 175 to 195 (IISGLGVGGITVLSPMLISEV) traverse the membrane as a helical segment. Over 196–201 (APSEMR) the chain is Cytoplasmic. The helical transmembrane segment at 202 to 222 (GTLVSCYQVMITLGIFLGYCT) threads the bilayer. Over 223–236 (NFGTKNYSNSVQWR) the chain is Extracellular. N228 carries N-linked (GlcNAc...) asparagine glycosylation. A helical membrane pass occupies residues 237–257 (VPLGLCFAWALFMIGGMMFVP). The Cytoplasmic portion of the chain corresponds to 258–340 (ESPRYLVEAG…IQSLQQLTGD (83 aa)). Residues 341-357 (NYFFYYGTIVFQAVGLS) traverse the membrane as a helical segment. Residues 358-363 (DSFETS) are Extracellular-facing. Residues 364–381 (IVFGVVNFFSTCCSLYTV) traverse the membrane as a helical segment. Residues 382–388 (DRFGRRN) lie on the Cytoplasmic side of the membrane. The chain crosses the membrane as a helical span at residues 389 to 409 (CLMWGAVGMVCCYVVYASVGV). The Extracellular segment spans residues 410–431 (TRLWPNGQDQPSSKGAGNCMIV). A helical transmembrane segment spans residues 432 to 452 (FACFYIFCFATTWAPIAYVVI). Residues 453–469 (SECFPLRVKSKCMSIAS) lie on the Cytoplasmic side of the membrane. Residues 470-490 (AANWIWGFLISFFTPFITGAI) traverse the membrane as a helical segment. Position 491 (N491) is a topological domain, extracellular. Residues 492–512 (FYYGYVFMGCMVFAYFYVFFF) form a helical membrane-spanning segment. Residues 513–570 (VPETKGLSLEEVNDMYAEGVLPWKSASWVPVSKRGADYNADDLMHDDQPFYKSLFSRK) lie on the Cytoplasmic side of the membrane.

It belongs to the major facilitator superfamily. Sugar transporter (TC 2.A.1.1) family.

It is found in the membrane. In terms of biological role, low-affinity glucose transporter. HXT1 is as well involved in the transport of mannose. The polypeptide is Low-affinity glucose transporter HXT1 (HXT1) (Saccharomyces cerevisiae (strain ATCC 204508 / S288c) (Baker's yeast)).